The primary structure comprises 343 residues: Protein RecA (343 aa).

64–71 (GPESSGKT) provides a ligand contact to ATP.

This sequence belongs to the RecA family.

The protein localises to the cytoplasm. Can catalyze the hydrolysis of ATP in the presence of single-stranded DNA, the ATP-dependent uptake of single-stranded DNA by duplex DNA, and the ATP-dependent hybridization of homologous single-stranded DNAs. It interacts with LexA causing its activation and leading to its autocatalytic cleavage. This chain is Protein RecA, found in Cereibacter sphaeroides (strain ATCC 17023 / DSM 158 / JCM 6121 / CCUG 31486 / LMG 2827 / NBRC 12203 / NCIMB 8253 / ATH 2.4.1.) (Rhodobacter sphaeroides).